A 451-amino-acid chain; its full sequence is Trigger factor (451 aa).

A PPIase FKBP-type domain is found at 171-256 (GDRVKVNFKG…ATAIEAPEDK (86 aa)).

It belongs to the FKBP-type PPIase family. Tig subfamily.

It localises to the cytoplasm. The enzyme catalyses [protein]-peptidylproline (omega=180) = [protein]-peptidylproline (omega=0). Its function is as follows. Involved in protein export. Acts as a chaperone by maintaining the newly synthesized protein in an open conformation. Functions as a peptidyl-prolyl cis-trans isomerase. This chain is Trigger factor, found in Bradyrhizobium sp. (strain ORS 278).